We begin with the raw amino-acid sequence, 390 residues long: GTPase Obg (390 aa).

The 159-residue stretch at 1–159 (MKFVDEASIL…RELLLELMLL (159 aa)) folds into the Obg domain. The interval 127–147 (NTRFKSSVNRTPRQKTNGTPG) is disordered. A compositionally biased stretch (polar residues) spans 129–145 (RFKSSVNRTPRQKTNGT). Residues 160-333 (ADVGMLGMPN…LCWDVMTFII (174 aa)) form the OBG-type G domain. GTP-binding positions include 166 to 173 (GMPNAGKS), 191 to 195 (FTTLV), 213 to 216 (DIPG), 283 to 286 (NKID), and 314 to 316 (SAA). Residues serine 173 and threonine 193 each contribute to the Mg(2+) site.

It belongs to the TRAFAC class OBG-HflX-like GTPase superfamily. OBG GTPase family. Monomer. The cofactor is Mg(2+).

The protein localises to the cytoplasm. In terms of biological role, an essential GTPase which binds GTP, GDP and possibly (p)ppGpp with moderate affinity, with high nucleotide exchange rates and a fairly low GTP hydrolysis rate. Plays a role in control of the cell cycle, stress response, ribosome biogenesis and in those bacteria that undergo differentiation, in morphogenesis control. The chain is GTPase Obg from Escherichia coli O157:H7.